Consider the following 125-residue polypeptide: U11-myrmicitoxin-Ta1a (125 aa).

A signal peptide spans 1–21 (MKTVIFILGFAFVAILIPTNG). A propeptide spanning residues 22–91 (ESMADADAMA…RAMAAAYAAA (70 aa)) is cleaved from the precursor. The cysteines at positions 101 and 124 are disulfide-linked.

Belongs to the formicidae venom precursor-01 superfamily. Expressed by the venom gland.

The protein resides in the secreted. It is found in the target cell membrane. Functionally, neurotoxin that causes irreversible rapid flaccid paralysis in blowflies and honeybees upon intrathoracic injection. Causes a quick and irreversible cytolytic effect (at 10 uM) indicating it possibly acts as a pore-forming peptide. Shows only weak effect on aphids (A.pisum) at high doses 24 hours post intrathoracic injection. In vitro, is not cytotoxic on the dipteran S2 Drosophila embryonic cell line. The protein is U11-myrmicitoxin-Ta1a of Tetramorium africanum (Fierce ant).